Consider the following 453-residue polypeptide: Probable glycine dehydrogenase (decarboxylating) subunit 1 (453 aa).

This sequence belongs to the GcvP family. N-terminal subunit subfamily. The glycine cleavage system is composed of four proteins: P, T, L and H. In this organism, the P 'protein' is a heterodimer of two subunits.

It catalyses the reaction N(6)-[(R)-lipoyl]-L-lysyl-[glycine-cleavage complex H protein] + glycine + H(+) = N(6)-[(R)-S(8)-aminomethyldihydrolipoyl]-L-lysyl-[glycine-cleavage complex H protein] + CO2. The glycine cleavage system catalyzes the degradation of glycine. The P protein binds the alpha-amino group of glycine through its pyridoxal phosphate cofactor; CO(2) is released and the remaining methylamine moiety is then transferred to the lipoamide cofactor of the H protein. The sequence is that of Probable glycine dehydrogenase (decarboxylating) subunit 1 from Caulobacter sp. (strain K31).